The sequence spans 217 residues: Guanylate kinase (217 aa).

Residues 1–10 (MAVSSTTLSS) show a composition bias toward low complexity. Residues 1–30 (MAVSSTTLSSPTPPECLQQQEAPRPPATRG) form a disordered region. A Guanylate kinase-like domain is found at 30 to 208 (GRLVVLTGPS…ALQELEALLY (179 aa)). 37 to 44 (GPSGVGKG) contacts ATP.

The protein belongs to the guanylate kinase family.

It is found in the cytoplasm. It catalyses the reaction GMP + ATP = GDP + ADP. The catalysed reaction is dZMP + ATP = dZDP + ADP. It participates in purine metabolism. Its function is as follows. Essential for recycling GMP and indirectly, cGMP. (Microbial infection) Catalyzes the phosphorylation of dZMP to dZDP, when the bacterium is infected by a phage that produces the substrate for the synthesis of dZTP (2- amino-2'-deoxyadenosine 5'-triphosphate), which is then used by the phage as a DNA polymerase substrate. This Synechococcus sp. (strain JA-3-3Ab) (Cyanobacteria bacterium Yellowstone A-Prime) protein is Guanylate kinase.